We begin with the raw amino-acid sequence, 322 residues long: uncharacterized protein (322 aa).

A Radical SAM core domain is found at 26–267 (HFGHKVFKVA…CDQLEIIPPE (242 aa)). 3 residues coordinate [4Fe-4S] cluster: C42, C54, and C57.

This sequence belongs to the radical SAM superfamily. The cofactor is [4Fe-4S] cluster.

This is an uncharacterized protein from Bacillus subtilis (strain 168).